A 225-amino-acid polypeptide reads, in one-letter code: Urease accessory protein UreG (225 aa).

25 to 32 contacts GTP; it reads GPVGAGKT.

It belongs to the SIMIBI class G3E GTPase family. UreG subfamily. In terms of assembly, homodimer. UreD, UreF and UreG form a complex that acts as a GTP-hydrolysis-dependent molecular chaperone, activating the urease apoprotein by helping to assemble the nickel containing metallocenter of UreC. The UreE protein probably delivers the nickel.

The protein localises to the cytoplasm. Its function is as follows. Facilitates the functional incorporation of the urease nickel metallocenter. This process requires GTP hydrolysis, probably effectuated by UreG. The sequence is that of Urease accessory protein UreG from Haemophilus influenzae (strain 86-028NP).